Consider the following 319-residue polypeptide: MRKNEYVNLPVICLVGPTASGKSGLAVRVCRRLYVDEHPAEIINTDSMVVYRGMDIGTATPTLREQRTVVHHLVSILDVTVPSSLVLMQTLARDAVEDCLSRGVIPVLVGGSALYTKAIIDEMSIPPTDPEVRARWQEKLDAEGPRVLHDELARRDPKAAESILPGNGRRIVRALEVIDLTGSFTATIPDGTLHWPKTVQMGLELSRKDIDQRIADRVDQMWAYGFVDEVRSLANVGLREGLTASRALGYRQVLEYLNGDYDEDEARRRTIIGTRRFARKQLMWYRRDDRIEWFNALAPDLDDRVVARVLTALTTDEED.

An ATP-binding site is contributed by 16–23; the sequence is GPTASGKS. 18 to 23 provides a ligand contact to substrate; that stretch reads TASGKS. An interaction with substrate tRNA region spans residues 46 to 49; the sequence is DSMV.

It belongs to the IPP transferase family. As to quaternary structure, monomer. It depends on Mg(2+) as a cofactor.

The catalysed reaction is adenosine(37) in tRNA + dimethylallyl diphosphate = N(6)-dimethylallyladenosine(37) in tRNA + diphosphate. In terms of biological role, catalyzes the transfer of a dimethylallyl group onto the adenine at position 37 in tRNAs that read codons beginning with uridine, leading to the formation of N6-(dimethylallyl)adenosine (i(6)A). The sequence is that of tRNA dimethylallyltransferase from Cutibacterium acnes (strain DSM 16379 / KPA171202) (Propionibacterium acnes).